The chain runs to 255 residues: MKHIPRKRFGQNFLTDDTVLYNIIRAIDPQPQDTMVEIGPGLAAMTRLLLEGVQQMHVVELDRDLVERLKKSFDPKRLIIHSADALQFDFSTIPVPAGSKLRVVGNLPYNISSPLLFHLAEMAPHVQDQHFMLQKEVVERMVAEPGSKVYGRLSVMLQWRYHMELMFVVPPTAFDPPPRVESAIVRMIPLAQPLPCDQAKLEQVVLKAFSQRRKVIRNCLAGMFAESDLLEVGIDPQLRPETIPLAQYVALANRL.

Residues Asn-12, Leu-14, Gly-39, Glu-60, Asp-84, and Asn-106 each coordinate S-adenosyl-L-methionine.

It belongs to the class I-like SAM-binding methyltransferase superfamily. rRNA adenine N(6)-methyltransferase family. RsmA subfamily.

Its subcellular location is the cytoplasm. The catalysed reaction is adenosine(1518)/adenosine(1519) in 16S rRNA + 4 S-adenosyl-L-methionine = N(6)-dimethyladenosine(1518)/N(6)-dimethyladenosine(1519) in 16S rRNA + 4 S-adenosyl-L-homocysteine + 4 H(+). Specifically dimethylates two adjacent adenosines (A1518 and A1519) in the loop of a conserved hairpin near the 3'-end of 16S rRNA in the 30S particle. May play a critical role in biogenesis of 30S subunits. In Janthinobacterium sp. (strain Marseille) (Minibacterium massiliensis), this protein is Ribosomal RNA small subunit methyltransferase A.